The sequence spans 495 residues: 3-octaprenyl-4-hydroxybenzoate carboxy-lyase (495 aa).

Asn172 serves as a coordination point for Mn(2+). Prenylated FMN is bound by residues 175–177 (IYR), 189–191 (RWL), and 194–195 (RG). Residue Glu238 participates in Mn(2+) binding. Asp287 (proton donor) is an active-site residue.

The protein belongs to the UbiD family. In terms of assembly, homohexamer. Prenylated FMN is required as a cofactor. Requires Mn(2+) as cofactor.

It is found in the cell membrane. The enzyme catalyses a 4-hydroxy-3-(all-trans-polyprenyl)benzoate + H(+) = a 2-(all-trans-polyprenyl)phenol + CO2. Its pathway is cofactor biosynthesis; ubiquinone biosynthesis. Catalyzes the decarboxylation of 3-octaprenyl-4-hydroxy benzoate to 2-octaprenylphenol, an intermediate step in ubiquinone biosynthesis. This chain is 3-octaprenyl-4-hydroxybenzoate carboxy-lyase, found in Yersinia pseudotuberculosis serotype O:1b (strain IP 31758).